Consider the following 290-residue polypeptide: Phosphoribosylaminoimidazole-succinocarboxamide synthase (290 aa).

Belongs to the SAICAR synthetase family.

It catalyses the reaction 5-amino-1-(5-phospho-D-ribosyl)imidazole-4-carboxylate + L-aspartate + ATP = (2S)-2-[5-amino-1-(5-phospho-beta-D-ribosyl)imidazole-4-carboxamido]succinate + ADP + phosphate + 2 H(+). It functions in the pathway purine metabolism; IMP biosynthesis via de novo pathway; 5-amino-1-(5-phospho-D-ribosyl)imidazole-4-carboxamide from 5-amino-1-(5-phospho-D-ribosyl)imidazole-4-carboxylate: step 1/2. The polypeptide is Phosphoribosylaminoimidazole-succinocarboxamide synthase (Haemophilus influenzae (strain PittEE)).